The sequence spans 347 residues: Eukaryotic translation initiation factor 3 subunit H (347 aa).

In terms of domain architecture, MPN spans 6 to 149 (VCIDSSVALK…PSSTGPQGHT (144 aa)). The interval 136–155 (SDTDPSSTGPQGHTTTTPSG) is disordered. Over residues 138–155 (TDPSSTGPQGHTTTTPSG) the composition is skewed to polar residues.

The protein belongs to the eIF-3 subunit H family. As to quaternary structure, component of the eukaryotic translation initiation factor 3 (eIF-3) complex.

Its subcellular location is the cytoplasm. Component of the eukaryotic translation initiation factor 3 (eIF-3) complex, which is involved in protein synthesis of a specialized repertoire of mRNAs and, together with other initiation factors, stimulates binding of mRNA and methionyl-tRNAi to the 40S ribosome. The eIF-3 complex specifically targets and initiates translation of a subset of mRNAs involved in cell proliferation. This chain is Eukaryotic translation initiation factor 3 subunit H, found in Yarrowia lipolytica (strain CLIB 122 / E 150) (Yeast).